A 168-amino-acid chain; its full sequence is Peptide methionine sulfoxide reductase 2 (168 aa).

The MsrB domain maps to 40-168; that stretch reads DVKWNDALTP…NSASLNLKKD (129 aa). The Zn(2+) site is built by cysteine 79, cysteine 82, cysteine 128, and cysteine 131. The cysteines at positions 97 and 157 are disulfide-linked. The active-site Nucleophile is the cysteine 157.

Belongs to the MsrB Met sulfoxide reductase family. Zn(2+) serves as cofactor.

The enzyme catalyses L-methionyl-[protein] + [thioredoxin]-disulfide + H2O = L-methionyl-(R)-S-oxide-[protein] + [thioredoxin]-dithiol. Methionine-R-sulfoxide reductase which catalyzes the reduction of methionine sulfoxide (MetSO) to methionine in proteins. Plays a protective role against oxidative stress by restoring activity to proteins that have been inactivated by methionine oxidation. Protects iron-sulfur clusters from oxidative inactivation along with MXR1. Involved in the regulation of lifespan. This Saccharomyces cerevisiae (strain ATCC 204508 / S288c) (Baker's yeast) protein is Peptide methionine sulfoxide reductase 2 (MXR2).